A 105-amino-acid polypeptide reads, in one-letter code: Large ribosomal subunit protein bL21 (105 aa).

This sequence belongs to the bacterial ribosomal protein bL21 family. As to quaternary structure, part of the 50S ribosomal subunit. Contacts protein L20.

In terms of biological role, this protein binds to 23S rRNA in the presence of protein L20. This is Large ribosomal subunit protein bL21 from Methylobacterium nodulans (strain LMG 21967 / CNCM I-2342 / ORS 2060).